A 230-amino-acid chain; its full sequence is Nicotinamide riboside kinase (230 aa).

Residue 12–20 (GASCSGKST) participates in ATP binding. Residues Ser-19 and Asp-38 each contribute to the Mg(2+) site. Catalysis depends on Asp-38, which acts as the Proton acceptor. Substrate contacts are provided by residues 38 to 41 (DDFY) and 56 to 57 (WD). Arg-153 contributes to the ATP binding site. Substrate is bound by residues Arg-154 and 159–160 (GY). ATP is bound by residues 157–159 (RTG) and 203–205 (RIQ).

It belongs to the uridine kinase family. NRK subfamily.

It catalyses the reaction beta-nicotinamide D-riboside + ATP = beta-nicotinamide D-ribonucleotide + ADP + H(+). The enzyme catalyses beta-D-ribosylnicotinate + ATP = nicotinate beta-D-ribonucleotide + ADP + H(+). Its pathway is cofactor biosynthesis; NAD(+) biosynthesis. In terms of biological role, catalyzes the phosphorylation of nicotinamide riboside (NR) and nicotinic acid riboside (NaR) to form nicotinamide mononucleotide (NMN) and nicotinic acid mononucleotide (NaMN). The sequence is that of Nicotinamide riboside kinase (nrk1) from Schizosaccharomyces pombe (strain 972 / ATCC 24843) (Fission yeast).